The sequence spans 392 residues: Phosphopentomutase (392 aa).

6 residues coordinate Mn(2+): Asp13, Asp286, His291, Asp327, His328, and His339.

It belongs to the phosphopentomutase family. Mn(2+) is required as a cofactor.

It is found in the cytoplasm. The catalysed reaction is 2-deoxy-alpha-D-ribose 1-phosphate = 2-deoxy-D-ribose 5-phosphate. It catalyses the reaction alpha-D-ribose 1-phosphate = D-ribose 5-phosphate. It participates in carbohydrate degradation; 2-deoxy-D-ribose 1-phosphate degradation; D-glyceraldehyde 3-phosphate and acetaldehyde from 2-deoxy-alpha-D-ribose 1-phosphate: step 1/2. Isomerase that catalyzes the conversion of deoxy-ribose 1-phosphate (dRib-1-P) and ribose 1-phosphate (Rib-1-P) to deoxy-ribose 5-phosphate (dRib-5-P) and ribose 5-phosphate (Rib-5-P), respectively. The sequence is that of Phosphopentomutase from Oceanobacillus iheyensis (strain DSM 14371 / CIP 107618 / JCM 11309 / KCTC 3954 / HTE831).